A 377-amino-acid polypeptide reads, in one-letter code: Chaperone protein DnaJ (377 aa).

The J domain maps to Asp5 to Gly69. The CR-type zinc finger occupies Gly134–Asn216. Residues Cys147, Cys150, Cys164, Cys167, Cys190, Cys193, Cys204, and Cys207 each contribute to the Zn(2+) site. 4 CXXCXGXG motif repeats span residues Cys147–Gly154, Cys164–Gly171, Cys190–Gly197, and Cys204–Gly211.

This sequence belongs to the DnaJ family. As to quaternary structure, homodimer. The cofactor is Zn(2+).

It is found in the cytoplasm. Participates actively in the response to hyperosmotic and heat shock by preventing the aggregation of stress-denatured proteins and by disaggregating proteins, also in an autonomous, DnaK-independent fashion. Unfolded proteins bind initially to DnaJ; upon interaction with the DnaJ-bound protein, DnaK hydrolyzes its bound ATP, resulting in the formation of a stable complex. GrpE releases ADP from DnaK; ATP binding to DnaK triggers the release of the substrate protein, thus completing the reaction cycle. Several rounds of ATP-dependent interactions between DnaJ, DnaK and GrpE are required for fully efficient folding. Also involved, together with DnaK and GrpE, in the DNA replication of plasmids through activation of initiation proteins. In Staphylococcus carnosus (strain TM300), this protein is Chaperone protein DnaJ.